The primary structure comprises 222 residues: Hexitol phosphatase B (222 aa).

D13 (nucleophile) is an active-site residue. Residues D13 and D15 each coordinate a divalent metal cation. Substrate-binding positions include 13-15 (DMD), 115-116 (SA), and K148. Catalysis depends on D15, which acts as the Proton donor. An a divalent metal cation-binding site is contributed by D173.

This sequence belongs to the HAD-like hydrolase superfamily. CbbY/CbbZ/Gph/YieH family. It depends on Mg(2+) as a cofactor. The cofactor is Mn(2+). Co(2+) is required as a cofactor. Zn(2+) serves as cofactor.

The catalysed reaction is sugar phosphate + H2O = sugar + phosphate.. The enzyme catalyses 2-deoxy-D-glucose 6-phosphate + H2O = 2-deoxy-D-glucose + phosphate. It carries out the reaction D-mannitol 1-phosphate + H2O = D-mannitol + phosphate. It catalyses the reaction D-sorbitol 6-phosphate + H2O = D-sorbitol + phosphate. In terms of biological role, sugar-phosphate phosphohydrolase that catalyzes the dephosphorylation of D-mannitol 1-phosphate and D-sorbitol 6-phosphate. Also catalyzes the dephosphorylation of 2-deoxyglucose 6-phosphate (2dGlu6P); this is a biologically important activity in vivo since it contributes to the elimination of this toxic compound and plays an important role in the resistance of E.coli to 2-deoxyglucose. To a lesser extent, is also able to dephosphorylate mannose 6-phosphate (Man6P), erythrose-4-phosphate, 2-deoxyribose-5-phosphate (2dRib5P), ribose-5-phosphate (Rib5P) and glucose-6-phosphate (Glu6P) in vitro. The protein is Hexitol phosphatase B of Escherichia coli (strain K12).